The following is a 269-amino-acid chain: Dermonecrotic toxin SpeSicTox-betaIB3 (269 aa).

His5 is an active-site residue. Glu25 and Asp27 together coordinate Mg(2+). Catalysis depends on His41, which acts as the Nucleophile. 2 cysteine pairs are disulfide-bonded: Cys45–Cys51 and Cys47–Cys191. Asp85 lines the Mg(2+) pocket.

It belongs to the arthropod phospholipase D family. Class II subfamily. Mg(2+) is required as a cofactor. As to expression, expressed by the venom gland.

Its subcellular location is the secreted. The catalysed reaction is an N-(acyl)-sphingosylphosphocholine = an N-(acyl)-sphingosyl-1,3-cyclic phosphate + choline. The enzyme catalyses an N-(acyl)-sphingosylphosphoethanolamine = an N-(acyl)-sphingosyl-1,3-cyclic phosphate + ethanolamine. It catalyses the reaction a 1-acyl-sn-glycero-3-phosphocholine = a 1-acyl-sn-glycero-2,3-cyclic phosphate + choline. It carries out the reaction a 1-acyl-sn-glycero-3-phosphoethanolamine = a 1-acyl-sn-glycero-2,3-cyclic phosphate + ethanolamine. Functionally, dermonecrotic toxins cleave the phosphodiester linkage between the phosphate and headgroup of certain phospholipids (sphingolipid and lysolipid substrates), forming an alcohol (often choline) and a cyclic phosphate. This toxin acts on sphingomyelin (SM). It may also act on ceramide phosphoethanolamine (CPE), lysophosphatidylcholine (LPC) and lysophosphatidylethanolamine (LPE), but not on lysophosphatidylserine (LPS), and lysophosphatidylglycerol (LPG). It acts by transphosphatidylation, releasing exclusively cyclic phosphate products as second products. Induces dermonecrosis, hemolysis, increased vascular permeability, edema, inflammatory response, and platelet aggregation. The protein is Dermonecrotic toxin SpeSicTox-betaIB3 of Sicarius peruensis (Six-eyed sand spider).